The following is a 506-amino-acid chain: MEDKVLLAVAMVALIAVLSKLKSLLETKPKLNLPPGPWTLPLIGSIHHLVSSPLPYRAMRELAHKHGPLMMLWLGEVPTLVVSSPEAAQAITKTHDVTFADRHMNSTVDILTFNGNDIVFGTYGEQWRQLRKLSVLELLSVARVQSFQRIREEEVARFMRNLAASAGAGATVDLSKMISSFINDTFVRESIGSRCKHQDEYLDALHTGIRVAAELSVANLFPSSRLLQSLSTARRKAVAARDEMARILGQIIRETKEAMDWGDKASNESMISVLLRLQKEAGLPIELTDDIVMALMFDLFGAGSDTSSTTLTWCMTEMIRYPATMAKAQAEVREAFKGKTTITEDDLSRANLSYLKLVVKEALRLHCPVPLLIPRKCRETCQIMGYDIPKDTCVLVNVWAICRDSRYWEDADEFKPERFENSSLDYKGTSHEYLPFGSGRRMCPGGNLGVANMELALASLLYHFDWKLPSGQEPKDVDVWEAAGLVGRKNAGLVLHPVSRFAPVNA.

A helical transmembrane segment spans residues 5-25; that stretch reads VLLAVAMVALIAVLSKLKSLL. Cysteine 443 provides a ligand contact to heme.

The protein belongs to the cytochrome P450 family. It depends on heme as a cofactor.

Its subcellular location is the membrane. The enzyme catalyses dolabradiene + reduced [NADPH--hemoprotein reductase] + O2 = 15,16-epoxydolabrene + oxidized [NADPH--hemoprotein reductase] + H2O + H(+). It catalyses the reaction 15,16-epoxydolabrene + reduced [NADPH--hemoprotein reductase] + O2 = 3beta-hydroxy-15,16-epoxydolabrene + oxidized [NADPH--hemoprotein reductase] + H2O + H(+). Involved in the production of antifungal dolabralexin phytoalexins in response to biotic and abiotic stresses. Catalyzes the epoxidation of dolabradiene at C-16, followed by hydroxylation at C-3, to yield the epoxides 15,16-epoxydolabrene (epoxydolabrene) and 3b-hydroxy-15,16-epoxydolabrene (epoxydolabranol). The protein is Dolabradiene monooxygenase of Zea mays (Maize).